The sequence spans 251 residues: Ribosome maturation factor RimP (251 aa).

Positions 198–251 are disordered; that stretch reads NLGLEPPAAPHAKISEKTTKNTKPKKKPAPTNTKKHRLAAERARRGEIEPDEGD. Residues 217 to 234 are compositionally biased toward basic residues; it reads KNTKPKKKPAPTNTKKHR. Positions 235 to 245 are enriched in basic and acidic residues; it reads LAAERARRGEI.

It belongs to the RimP family.

Its subcellular location is the cytoplasm. In terms of biological role, required for maturation of 30S ribosomal subunits. The polypeptide is Ribosome maturation factor RimP (Bradyrhizobium diazoefficiens (strain JCM 10833 / BCRC 13528 / IAM 13628 / NBRC 14792 / USDA 110)).